A 335-amino-acid polypeptide reads, in one-letter code: Anthranilate phosphoribosyltransferase (335 aa).

Residues G79, 82–83 (GD), T87, 89–92 (NVST), 107–115 (KHCNKGVSS), and S119 contribute to the 5-phospho-alpha-D-ribose 1-diphosphate site. G79 contacts anthranilate. Residue S91 participates in Mg(2+) binding. N110 contributes to the anthranilate binding site. R165 is an anthranilate binding site. Residues D223 and E224 each coordinate Mg(2+).

The protein belongs to the anthranilate phosphoribosyltransferase family. In terms of assembly, homodimer. It depends on Mg(2+) as a cofactor.

The catalysed reaction is N-(5-phospho-beta-D-ribosyl)anthranilate + diphosphate = 5-phospho-alpha-D-ribose 1-diphosphate + anthranilate. Its pathway is amino-acid biosynthesis; L-tryptophan biosynthesis; L-tryptophan from chorismate: step 2/5. Functionally, catalyzes the transfer of the phosphoribosyl group of 5-phosphorylribose-1-pyrophosphate (PRPP) to anthranilate to yield N-(5'-phosphoribosyl)-anthranilate (PRA). In Buchnera aphidicola subsp. Schizaphis graminum (strain Sg), this protein is Anthranilate phosphoribosyltransferase.